A 306-amino-acid chain; its full sequence is MMIITTMQDAIGRTPVFKFTNKDYPIPLNSAIYAKLEHLNPGGSVKDRLGQYLIGEGFKTGKITSKTTIIEPTAGNTGIALALVAIKHHLKTIFVVPEKFSTEKQQIMRALGALVINTPTSEGISGAIKKSKELAESIPDSYLPLQFENPDNPAAYYHTLAPEIVQELGTNLTSFVAGIGSGGTFAGTARYLKERIPAIRLIGVEPEGSILNGGEPGPHEIEGIGVEFIPPFFENLDIDGFETISDEEGFSYTRKLAKKNGLLVGSSSGAAFVAALKEAQRLPEGSQVLTIFPDVADRYLSKGIYL.

Lys-46 bears the N6-(pyridoxal phosphate)lysine mark. Residues Asn-76, 180-184 (GSGGT), and Ser-267 each bind pyridoxal 5'-phosphate.

This sequence belongs to the cysteine synthase/cystathionine beta-synthase family. As to quaternary structure, homodimer. Requires pyridoxal 5'-phosphate as cofactor.

It carries out the reaction O-acetyl-L-serine + hydrogen sulfide = L-cysteine + acetate. It functions in the pathway amino-acid biosynthesis; L-cysteine biosynthesis; L-cysteine from L-serine: step 2/2. The polypeptide is Cysteine synthase (cysM) (Helicobacter pylori (strain ATCC 700392 / 26695) (Campylobacter pylori)).